Here is a 259-residue protein sequence, read N- to C-terminus: GTP cyclohydrolase FolE2 (259 aa).

It belongs to the GTP cyclohydrolase IV family.

The catalysed reaction is GTP + H2O = 7,8-dihydroneopterin 3'-triphosphate + formate + H(+). It functions in the pathway cofactor biosynthesis; 7,8-dihydroneopterin triphosphate biosynthesis; 7,8-dihydroneopterin triphosphate from GTP: step 1/1. In terms of biological role, converts GTP to 7,8-dihydroneopterin triphosphate. The polypeptide is GTP cyclohydrolase FolE2 (Thermotoga petrophila (strain ATCC BAA-488 / DSM 13995 / JCM 10881 / RKU-1)).